A 229-amino-acid chain; its full sequence is Large ribosomal subunit protein uL1 (229 aa).

This sequence belongs to the universal ribosomal protein uL1 family. As to quaternary structure, part of the 50S ribosomal subunit.

Binds directly to 23S rRNA. The L1 stalk is quite mobile in the ribosome, and is involved in E site tRNA release. In terms of biological role, protein L1 is also a translational repressor protein, it controls the translation of the L11 operon by binding to its mRNA. The protein is Large ribosomal subunit protein uL1 of Chlorobium luteolum (strain DSM 273 / BCRC 81028 / 2530) (Pelodictyon luteolum).